The primary structure comprises 327 residues: Malate dehydrogenase 1 (327 aa).

12 to 18 (GAAGQIA) contacts NAD(+). Positions 93 and 99 each coordinate substrate. Residues N106, Q113, and 130–132 (VGN) contribute to the NAD(+) site. Substrate-binding residues include N132 and R163. Residue H188 is the Proton acceptor of the active site.

The protein belongs to the LDH/MDH superfamily. MDH type 2 family.

It catalyses the reaction (S)-malate + NAD(+) = oxaloacetate + NADH + H(+). In terms of biological role, catalyzes the reversible oxidation of malate to oxaloacetate. The chain is Malate dehydrogenase 1 from Burkholderia thailandensis (strain ATCC 700388 / DSM 13276 / CCUG 48851 / CIP 106301 / E264).